The following is a 416-amino-acid chain: Phosphatidylserine decarboxylase proenzyme, mitochondrial (416 aa).

Topologically, residues 1–67 (MPGKSTRPLP…GRLHFPQLAL (67 aa)) are mitochondrial matrix. A helical transmembrane segment spans residues 68–86 (RRRLGQLSCMSKPALKLRS). Residues 87–416 (WPLTVLYYLL…IRFGEALGSL (330 aa)) lie on the Mitochondrial intermembrane side of the membrane. Catalysis depends on charge relay system; for autoendoproteolytic cleavage activity residues Asp-198, His-274, and Ser-385. Catalysis depends on Ser-385, which acts as the Schiff-base intermediate with substrate; via pyruvic acid; for decarboxylase activity. Ser-385 is subject to Pyruvic acid (Ser); by autocatalysis.

The protein belongs to the phosphatidylserine decarboxylase family. PSD-B subfamily. Eukaryotic type I sub-subfamily. Heterodimer of a large membrane-associated beta subunit and a small pyruvoyl-containing alpha subunit. It depends on pyruvate as a cofactor. Is synthesized initially as an inactive proenzyme. Formation of the active enzyme involves a self-maturation process in which the active site pyruvoyl group is generated from an internal serine residue via an autocatalytic post-translational modification. Two non-identical subunits are generated from the proenzyme in this reaction, and the pyruvate is formed at the N-terminus of the alpha chain, which is derived from the carboxyl end of the proenzyme. The autoendoproteolytic cleavage occurs by a canonical serine protease mechanism, in which the side chain hydroxyl group of the serine supplies its oxygen atom to form the C-terminus of the beta chain, while the remainder of the serine residue undergoes an oxidative deamination to produce ammonia and the pyruvoyl prosthetic group on the alpha chain. During this reaction, the Ser that is part of the protease active site of the proenzyme becomes the pyruvoyl prosthetic group, which constitutes an essential element of the active site of the mature decarboxylase.

Its subcellular location is the mitochondrion inner membrane. The protein localises to the cytoplasm. The protein resides in the lipid droplet. The enzyme catalyses a 1,2-diacyl-sn-glycero-3-phospho-L-serine + H(+) = a 1,2-diacyl-sn-glycero-3-phosphoethanolamine + CO2. Its pathway is phospholipid metabolism; phosphatidylethanolamine biosynthesis. Functionally, catalyzes the formation of phosphatidylethanolamine (PtdEtn) from phosphatidylserine (PtdSer). Plays a central role in phospholipid metabolism and in the interorganelle trafficking of phosphatidylserine. May be involved in lipid droplet biogenesis at the endoplasmic reticulum membrane. This Bos taurus (Bovine) protein is Phosphatidylserine decarboxylase proenzyme, mitochondrial.